Consider the following 289-residue polypeptide: MSMTSQIMKITKLEITILIDIVAIAAFLAVPGSTNHIYDLLILIFAGTLASMSASIFNNIYDMDIDPKMKRTSSRSQILNANTRSLFFIIATAMVLLSFVTSFILLNPVTSAFILGGFASYVLLYTIILKRRTSLNIVIGGIAGSFPALAGWASITGSVSATSLFIAFLVFMWTPTHFWNLSVNNVDDYKKSNIPMLPAVVGIKRTEFWIMVNTSILVIYSILPLFIKEIHVGLLYMPMAAVMDALLIYYVARPMINNYNKKDFKKAFHFSNMYMLMLLIGIMLILVKF.

9 helical membrane passes run 13-33, 37-57, 86-106, 109-129, 137-157, 159-179, 207-227, 232-252, and 267-287; these read LEIT…VPGS, IYDL…ASIF, LFFI…FILL, VTSA…TIIL, IVIG…SITG, VSAT…THFW, EFWI…PLFI, VGLL…YYVA, and AFHF…LILV.

The protein belongs to the UbiA prenyltransferase family. Protoheme IX farnesyltransferase subfamily.

It is found in the cell membrane. It catalyses the reaction heme b + (2E,6E)-farnesyl diphosphate + H2O = Fe(II)-heme o + diphosphate. Its pathway is porphyrin-containing compound metabolism; heme O biosynthesis; heme O from protoheme: step 1/1. Functionally, converts heme B (protoheme IX) to heme O by substitution of the vinyl group on carbon 2 of heme B porphyrin ring with a hydroxyethyl farnesyl side group. This chain is Protoheme IX farnesyltransferase 2, found in Picrophilus torridus (strain ATCC 700027 / DSM 9790 / JCM 10055 / NBRC 100828 / KAW 2/3).